The chain runs to 207 residues: Phosphoserine phosphatase (207 aa).

The active-site Nucleophile is the aspartate 8. The Mg(2+) site is built by aspartate 8 and aspartate 10. Aspartate 10 serves as the catalytic Proton donor. Substrate-binding positions include glutamate 17, arginine 53, 96–97, and lysine 141; that span reads SG. A Mg(2+)-binding site is contributed by aspartate 164. Asparagine 167 provides a ligand contact to substrate.

It belongs to the HAD-like hydrolase superfamily. SerB family. Mg(2+) serves as cofactor.

The enzyme catalyses O-phospho-L-serine + H2O = L-serine + phosphate. The catalysed reaction is O-phospho-D-serine + H2O = D-serine + phosphate. Its pathway is amino-acid biosynthesis; L-serine biosynthesis; L-serine from 3-phospho-D-glycerate: step 3/3. The sequence is that of Phosphoserine phosphatase from Campylobacter jejuni subsp. doylei (strain ATCC BAA-1458 / RM4099 / 269.97).